Consider the following 234-residue polypeptide: Uridylate kinase (234 aa).

Residue 9 to 12 (KLSG) coordinates ATP. Gly51 contributes to the UMP binding site. Positions 52 and 56 each coordinate ATP. UMP-binding positions include Asp71 and 132 to 139 (CGNPFFTT). Thr159, Tyr165, and Asp168 together coordinate ATP.

Belongs to the UMP kinase family. Homohexamer.

The protein localises to the cytoplasm. The enzyme catalyses UMP + ATP = UDP + ADP. It functions in the pathway pyrimidine metabolism; CTP biosynthesis via de novo pathway; UDP from UMP (UMPK route): step 1/1. With respect to regulation, inhibited by UTP. Its function is as follows. Catalyzes the reversible phosphorylation of UMP to UDP. This Prochlorococcus marinus (strain MIT 9215) protein is Uridylate kinase.